The following is a 218-amino-acid chain: UPF0598 protein C8orf82 homolog (218 aa).

Belongs to the UPF0598 family.

The sequence is that of UPF0598 protein C8orf82 homolog from Mus musculus (Mouse).